The chain runs to 326 residues: ELAV-like protein 1 (326 aa).

Position 2 is an N-acetylserine (serine 2). Serine 2 is modified (phosphoserine). The RRM 1 domain occupies 20-98; the sequence is TNLIVNYLPQ…KTIKVSYARP (79 aa). 2 positions are modified to phosphoserine: serine 100 and serine 158. The 81-residue stretch at 106–186 folds into the RRM 2 domain; the sequence is ANLYISGLPR…EPITVKFAAN (81 aa). A Glycyl lysine isopeptide (Lys-Gly) (interchain with G-Cter in SUMO2) cross-link involves residue lysine 191. Residues serine 197 and serine 202 each carry the phosphoserine modification. Arginine 206 is subject to Omega-N-methylarginine. Asymmetric dimethylarginine; by CARM1; alternate is present on arginine 217. Residue arginine 217 is modified to Omega-N-methylarginine; alternate. Phosphoserine is present on residues serine 221 and serine 318. In terms of domain architecture, RRM 3 spans 244-322; the sequence is WCIFIYNLGQ…KILQVSFKTN (79 aa).

Belongs to the RRM elav family. In terms of assembly, monomer and homodimer (in vitro). Interacts with ANP32A. Interacts with ZNF385A; the interaction is indirect and mRNA-dependent and may regulate p53/TP53 expression. Identified in a mRNP complex, at least composed of DHX9, DDX3X, ELAVL1, HNRNPU, IGF2BP1, ILF3, PABPC1, PCBP2, PTBP2, STAU1, STAU2, SYNCRIP and YBX1. Interacts with AGO1 and AGO2. Interacts with IGF2BP1. Interacts with IGF2BP2 and IGF2BP3. Interacts with HNRNPL. Interacts with DHX36; this interaction occurs in a RNA-dependent manner. Interacts with ILF3; this interaction occurs in a RNA-dependent manner. Interacts with PLEKHN1. Interacts with SHFL; the interaction increases in presence of RNA. Interacts with YBX1; interaction recruits ELAVL1 on C5-methylcytosine (m5C)-containing mRNAs, thereby promoting mRNA stability. Interacts with FXR1. In terms of processing, phosphorylated by MAPKAPK2. Phosphorylated by PRKCD. Methylated at Arg-217 by CARM1 in T-cells in response to LPS challenge.

The protein resides in the cytoplasm. The protein localises to the nucleus. Its subcellular location is the stress granule. It is found in the P-body. Functionally, RNA-binding protein that binds to the 3'-UTR region of mRNAs and increases their stability. Involved in embryonic stem cell (ESC) differentiation: preferentially binds mRNAs that are not methylated by N6-methyladenosine (m6A), stabilizing them, promoting ESC differentiation. Has also been shown to be capable of binding to m6A-containing mRNAs and contributes to MYC stability by binding to m6A-containing MYC mRNAs. Binds to poly-U elements and AU-rich elements (AREs) in the 3'-UTR of target mRNAs. Binds avidly to the AU-rich element in FOS and IL3/interleukin-3 mRNAs. In the case of the FOS AU-rich element, binds to a core element of 27 nucleotides that contain AUUUA, AUUUUA, and AUUUUUA motifs. Binds preferentially to the 5'-UUUU[AG]UUU-3' motif in vitro. With ZNF385A, binds the 3'-UTR of p53/TP53 mRNA to control their nuclear export induced by CDKN2A. Hence, may regulate p53/TP53 expression and mediate in part the CDKN2A anti-proliferative activity. May also bind with ZNF385A the CCNB1 mRNA. Increases the stability of the leptin mRNA harboring an AU-rich element (ARE) in its 3' UTR. The chain is ELAV-like protein 1 (Elavl1) from Mus musculus (Mouse).